A 332-amino-acid polypeptide reads, in one-letter code: 4-hydroxy-3-methylbut-2-enyl diphosphate reductase (332 aa).

Position 34 (C34) interacts with [4Fe-4S] cluster. (2E)-4-hydroxy-3-methylbut-2-enyl diphosphate-binding residues include H63 and H96. Residues H63 and H96 each coordinate dimethylallyl diphosphate. Isopentenyl diphosphate contacts are provided by H63 and H96. C118 is a binding site for [4Fe-4S] cluster. H146 contacts (2E)-4-hydroxy-3-methylbut-2-enyl diphosphate. Dimethylallyl diphosphate is bound at residue H146. H146 contacts isopentenyl diphosphate. E148 functions as the Proton donor in the catalytic mechanism. T186 is a binding site for (2E)-4-hydroxy-3-methylbut-2-enyl diphosphate. Residue C216 participates in [4Fe-4S] cluster binding. (2E)-4-hydroxy-3-methylbut-2-enyl diphosphate contacts are provided by S244, S245, N246, and S289. Residues S244, S245, N246, and S289 each contribute to the dimethylallyl diphosphate site. Isopentenyl diphosphate-binding residues include S244, S245, N246, and S289.

This sequence belongs to the IspH family. The cofactor is [4Fe-4S] cluster.

The enzyme catalyses isopentenyl diphosphate + 2 oxidized [2Fe-2S]-[ferredoxin] + H2O = (2E)-4-hydroxy-3-methylbut-2-enyl diphosphate + 2 reduced [2Fe-2S]-[ferredoxin] + 2 H(+). The catalysed reaction is dimethylallyl diphosphate + 2 oxidized [2Fe-2S]-[ferredoxin] + H2O = (2E)-4-hydroxy-3-methylbut-2-enyl diphosphate + 2 reduced [2Fe-2S]-[ferredoxin] + 2 H(+). The protein operates within isoprenoid biosynthesis; dimethylallyl diphosphate biosynthesis; dimethylallyl diphosphate from (2E)-4-hydroxy-3-methylbutenyl diphosphate: step 1/1. It participates in isoprenoid biosynthesis; isopentenyl diphosphate biosynthesis via DXP pathway; isopentenyl diphosphate from 1-deoxy-D-xylulose 5-phosphate: step 6/6. Its function is as follows. Catalyzes the conversion of 1-hydroxy-2-methyl-2-(E)-butenyl 4-diphosphate (HMBPP) into a mixture of isopentenyl diphosphate (IPP) and dimethylallyl diphosphate (DMAPP). Acts in the terminal step of the DOXP/MEP pathway for isoprenoid precursor biosynthesis. The sequence is that of 4-hydroxy-3-methylbut-2-enyl diphosphate reductase from Mycobacterium leprae (strain TN).